A 53-amino-acid polypeptide reads, in one-letter code: IgW transmembrane form Tm1T3/Tm6T3/Tm3C4 (53 aa).

Positions 1–25 are disordered; that stretch reads VQAVPPDVKGEEGKEEVEDMDGDDN. A compositionally biased stretch (acidic residues) spans 13-24; that stretch reads GKEEVEDMDGDD. The chain crosses the membrane as a helical span at residues 29–49; sequence VAAFAILFILSFLYSTFVTVV.

As to expression, expressed in the spleen, pancreas, peripheral blood lymphocytes and at low levels in the epigonal organ.

The protein resides in the membrane. This Ginglymostoma cirratum (Nurse shark) protein is IgW transmembrane form Tm1T3/Tm6T3/Tm3C4.